Here is a 387-residue protein sequence, read N- to C-terminus: Anhydro-N-acetylmuramic acid kinase (387 aa).

Residue 17–24 (GTSMDGVD) participates in ATP binding.

It belongs to the anhydro-N-acetylmuramic acid kinase family.

The enzyme catalyses 1,6-anhydro-N-acetyl-beta-muramate + ATP + H2O = N-acetyl-D-muramate 6-phosphate + ADP + H(+). Its pathway is amino-sugar metabolism; 1,6-anhydro-N-acetylmuramate degradation. It functions in the pathway cell wall biogenesis; peptidoglycan recycling. Functionally, catalyzes the specific phosphorylation of 1,6-anhydro-N-acetylmuramic acid (anhMurNAc) with the simultaneous cleavage of the 1,6-anhydro ring, generating MurNAc-6-P. Is required for the utilization of anhMurNAc either imported from the medium or derived from its own cell wall murein, and thus plays a role in cell wall recycling. This is Anhydro-N-acetylmuramic acid kinase from Burkholderia pseudomallei (strain 1710b).